The sequence spans 25 residues: Unknown protein 7 (25 aa).

The disordered stretch occupies residues 1–25 (MENGKVHVASMSGLSMPHMNEMLEK).

This Pseudotsuga menziesii (Douglas-fir) protein is Unknown protein 7.